Reading from the N-terminus, the 144-residue chain is Large ribosomal subunit protein uL15 (144 aa).

Residues 1–51 (MELNSIKPGSGSKHAKRRVGRGIGSGLGKTAGRGHKGQKSRAGGYHKVGFE) are disordered. Gly residues predominate over residues 21–31 (RGIGSGLGKTA).

Belongs to the universal ribosomal protein uL15 family. As to quaternary structure, part of the 50S ribosomal subunit.

Functionally, binds to the 23S rRNA. The chain is Large ribosomal subunit protein uL15 from Leptothrix cholodnii (strain ATCC 51168 / LMG 8142 / SP-6) (Leptothrix discophora (strain SP-6)).